The chain runs to 384 residues: Flap endonuclease 1 (384 aa).

The interval 1–105 is N-domain; sequence MGIKGLTKLL…GELAKRKDKR (105 aa). Asp34 contributes to the Mg(2+) binding site. Arg71 contributes to the DNA binding site. Mg(2+) is bound by residues Asp87, Glu159, Glu161, Asp180, and Asp182. The tract at residues 123–254 is I-domain; sequence EIEKLSKRTV…VNALKYIKQY (132 aa). Glu159 is a DNA binding site. Gly232 and Asp234 together coordinate DNA. Asp234 lines the Mg(2+) pocket. Residues 337–345 form an interaction with PCNA region; sequence GQNRLETFF. The disordered stretch occupies residues 353 to 384; that stretch reads STVGKRKEPEKGKGKFGAAGGKKSKGVTKRKF. Basic residues predominate over residues 374–384; it reads KKSKGVTKRKF.

This sequence belongs to the XPG/RAD2 endonuclease family. FEN1 subfamily. As to quaternary structure, interacts with PCNA. Three molecules of FEN1 bind to one PCNA trimer with each molecule binding to one PCNA monomer. PCNA stimulates the nuclease activity without altering cleavage specificity. Mg(2+) serves as cofactor. Post-translationally, phosphorylated. Phosphorylation upon DNA damage induces relocalization to the nuclear plasma.

It localises to the nucleus. It is found in the nucleolus. The protein resides in the nucleoplasm. The protein localises to the mitochondrion. Functionally, structure-specific nuclease with 5'-flap endonuclease and 5'-3' exonuclease activities involved in DNA replication and repair. During DNA replication, cleaves the 5'-overhanging flap structure that is generated by displacement synthesis when DNA polymerase encounters the 5'-end of a downstream Okazaki fragment. It enters the flap from the 5'-end and then tracks to cleave the flap base, leaving a nick for ligation. Also involved in the long patch base excision repair (LP-BER) pathway, by cleaving within the apurinic/apyrimidinic (AP) site-terminated flap. Acts as a genome stabilization factor that prevents flaps from equilibrating into structures that lead to duplications and deletions. Also possesses 5'-3' exonuclease activity on nicked or gapped double-stranded DNA, and exhibits RNase H activity. Also involved in replication and repair of rDNA and in repairing mitochondrial DNA. This Micromonas commoda (strain RCC299 / NOUM17 / CCMP2709) (Picoplanktonic green alga) protein is Flap endonuclease 1.